The chain runs to 492 residues: MQPQRDLRGLWLLLLSVFLLLFEVARAGRSVVSCPANCLCASNILSCSKQQLPNVPQSLPSYTALLDLSHNNLSRLRAEWTPTRLTNLHSLLLSHNHLNFISSEAFVPVPNLRYLDLSSNHLHTLDEFLFSDLQALEVLLLYNNHIVVVDRNAFEDMAQLQKLYLSQNQISRFPVELIKDGNKLPKLMLLDLSSNKLKKLPLTDLQKLPAWVKNGLYLHNNPLECDCKLYQLFSHWQYRQLSSVMDFQEDLYCMHSKKLHNIFSLDFFNCSEYKESAWEAHLGDTLTIRCDTKQQGMTKVWVSPSNEQVLSQGSNGSVSVRNGDLFFKKVQVEDGGVYTCYAMGETFNETLSVELKVYNFTLHGHHDTLNTAYTTLVGCILSVVLVLIYLYLTPCRCWCRGVEKPSSHQGDSLSSSMLSTTPNHDPMAGGDKDDGFDRRVAFLEPAGPGQGQNGKLKPGNTLPVPEATGKGQRRMSDPESVSSVFSDTPIVV.

The first 27 residues, methionine 1–alanine 27, serve as a signal peptide directing secretion. The LRRNT domain maps to glycine 28 to serine 61. Residues glycine 28 to threonine 371 are Extracellular-facing. Intrachain disulfides connect cysteine 34-cysteine 40 and cysteine 38-cysteine 47. LRR repeat units lie at residues tyrosine 62–threonine 83, asparagine 87–proline 108, asparagine 111–aspartate 132, alanine 135–aspartate 156, glutamine 159–aspartate 180, and lysine 186–glutamine 206. N-linked (GlcNAc...) asparagine glycosylation occurs at asparagine 72. The region spanning leucine 208 to glutamate 272 is the LRRCT domain. 3 cysteine pairs are disulfide-bonded: cysteine 225-cysteine 253, cysteine 227-cysteine 270, and cysteine 290-cysteine 340. N-linked (GlcNAc...) asparagine glycosylation is found at asparagine 269, asparagine 315, asparagine 348, and asparagine 359. The region spanning asparagine 269–serine 352 is the Ig-like C2-type domain. The helical transmembrane segment at alanine 372–leucine 392 threads the bilayer. Over threonine 393–valine 492 the chain is Cytoplasmic. Residues lysine 404–valine 492 are disordered. The segment covering serine 407–asparagine 423 has biased composition (polar residues). The span at glycine 430–alanine 441 shows a compositional bias: basic and acidic residues. A phosphoserine mark is found at serine 476 and serine 480.

This sequence belongs to the immunoglobulin superfamily. AMIGO family. Homodimer, and heterodimer with AMIGO2 and AMIGO3. Interacts with KCNB1. Expressed in hippocampal and cortical neurons (at protein level). High levels in cerebellum, cerebrum, and retina. Low levels in liver, kidney, small intestine, spleen, lung and heart.

The protein localises to the cell membrane. Its subcellular location is the perikaryon. It localises to the cell projection. It is found in the dendrite. Its function is as follows. Promotes growth and fasciculation of neurites from cultured hippocampal neurons. May be involved in fasciculation as well as myelination of developing neural axons. May have a role in regeneration as well as neural plasticity in the adult nervous system. May mediate homophilic as well as heterophilic cell-cell interaction and contribute to signal transduction through its intracellular domain. Assembled with KCNB1 modulates the gating characteristics of the delayed rectifier voltage-dependent potassium channel KCNB1. The polypeptide is Amphoterin-induced protein 1 (Mus musculus (Mouse)).